The following is a 354-amino-acid chain: Phosphate acyltransferase (354 aa).

This sequence belongs to the PlsX family. As to quaternary structure, homodimer. Probably interacts with PlsY.

The protein localises to the cytoplasm. The catalysed reaction is a fatty acyl-[ACP] + phosphate = an acyl phosphate + holo-[ACP]. The protein operates within lipid metabolism; phospholipid metabolism. Its function is as follows. Catalyzes the reversible formation of acyl-phosphate (acyl-PO(4)) from acyl-[acyl-carrier-protein] (acyl-ACP). This enzyme utilizes acyl-ACP as fatty acyl donor, but not acyl-CoA. The polypeptide is Phosphate acyltransferase (Bordetella petrii (strain ATCC BAA-461 / DSM 12804 / CCUG 43448)).